The chain runs to 397 residues: Elongation factor Tu (397 aa).

Residues 10–207 enclose the tr-type G domain; sequence KPHVNIGTIG…VLDEYVKEPV (198 aa). The tract at residues 19-26 is G1; sequence GHIDHGKT. 19-26 provides a ligand contact to GTP; sequence GHIDHGKT. Thr-26 provides a ligand contact to Mg(2+). The tract at residues 60–64 is G2; it reads GITIS. Positions 81 to 84 are G3; it reads DCPG. GTP contacts are provided by residues 81–85 and 136–139; these read DCPGH and NKCD. The G4 stretch occupies residues 136–139; that stretch reads NKCD. The segment at 174 to 176 is G5; that stretch reads SAL.

The protein belongs to the TRAFAC class translation factor GTPase superfamily. Classic translation factor GTPase family. EF-Tu/EF-1A subfamily. In terms of assembly, monomer.

The protein resides in the cytoplasm. It carries out the reaction GTP + H2O = GDP + phosphate + H(+). Its function is as follows. GTP hydrolase that promotes the GTP-dependent binding of aminoacyl-tRNA to the A-site of ribosomes during protein biosynthesis. In Desulforapulum autotrophicum (strain ATCC 43914 / DSM 3382 / VKM B-1955 / HRM2) (Desulfobacterium autotrophicum), this protein is Elongation factor Tu.